The sequence spans 337 residues: Adenylosuccinate synthetase (337 aa).

Residues 12–18 and 42–44 contribute to the GTP site; these read GDEGKGK and GHT. Asp13 (proton acceptor) is an active-site residue. Mg(2+) contacts are provided by Asp13 and Gly42. IMP contacts are provided by residues 13–16, 40–43, Thr124, Arg138, Gln176, Thr191, and Arg253; these read DEGK and NAGH. His43 acts as the Proton donor in catalysis. 249–255 serves as a coordination point for substrate; the sequence is TVTGRRR. GTP-binding positions include Arg255, 281 to 283, and 321 to 323; these read GVD and STG.

The protein belongs to the adenylosuccinate synthetase family. In terms of assembly, homodimer. The cofactor is Mg(2+).

It is found in the cytoplasm. The catalysed reaction is IMP + L-aspartate + GTP = N(6)-(1,2-dicarboxyethyl)-AMP + GDP + phosphate + 2 H(+). It participates in purine metabolism; AMP biosynthesis via de novo pathway; AMP from IMP: step 1/2. Functionally, plays an important role in the de novo pathway of purine nucleotide biosynthesis. Catalyzes the first committed step in the biosynthesis of AMP from IMP. This Archaeoglobus fulgidus (strain ATCC 49558 / DSM 4304 / JCM 9628 / NBRC 100126 / VC-16) protein is Adenylosuccinate synthetase.